We begin with the raw amino-acid sequence, 976 residues long: Ephrin type-A receptor 2 (976 aa).

The signal sequence occupies residues 1-23; the sequence is MELWAARACFVLLWGCALAPATA. Residues 1 to 206 are mediates interaction with CLDN4; it reads MELWAARACF…YYKKCPELLQ (206 aa). Residues 25 to 537 lie on the Extracellular side of the membrane; that stretch reads QGKEVVLLDF…SPEGSGSLAV (513 aa). One can recognise an Eph LBD domain in the interval 28 to 206; sequence EVVLLDFAAA…YYKKCPELLQ (179 aa). Disulfide bonds link cysteine 70/cysteine 188 and cysteine 105/cysteine 115. The Fibronectin type-III 1 domain occupies 328 to 432; that stretch reads PPSAPHYLTA…TSRSFRTASV (105 aa). 2 N-linked (GlcNAc...) asparagine glycosylation sites follow: asparagine 407 and asparagine 435. The 92-residue stretch at 438 to 529 folds into the Fibronectin type-III 2 domain; it reads EPPKVRLEGR…KVHEFQTLSP (92 aa). The chain crosses the membrane as a helical span at residues 538 to 558; the sequence is IGGVAVCVVLLLLLAGAGFFI. At 559 to 976 the chain is on the cytoplasmic side; it reads HRRRKNLRAR…DQVNTVGIPI (418 aa). Serine 570 carries the phosphoserine modification. Phosphotyrosine is present on tyrosine 575. At serine 579 the chain carries Phosphoserine. The residue at position 588 (tyrosine 588) is a Phosphotyrosine; by autocatalysis. Residue tyrosine 594 is modified to Phosphotyrosine. The segment at 606–906 is mediates interaction with ARHGEF16; it reads TEIHPSCVTR…STSGSEGVPF (301 aa). One can recognise a Protein kinase domain in the interval 613 to 875; it reads VTRQKVIGAG…DIVSILDKLI (263 aa). 619 to 627 is an ATP binding site; sequence IGAGEFGEV. At tyrosine 628 the chain carries Phosphotyrosine. Residue lysine 646 coordinates ATP. Threonine 647 is modified (phosphothreonine). At tyrosine 735 the chain carries Phosphotyrosine; by autocatalysis. Aspartate 739 functions as the Proton acceptor in the catalytic mechanism. The residue at position 772 (tyrosine 772) is a Phosphotyrosine. Phosphoserine occurs at positions 869, 892, 897, and 901. The interval 886–976 is negatively regulates interaction with ARHGEF16; it reads DFDPRVSIRL…DQVNTVGIPI (91 aa). Residues 904 to 968 enclose the SAM domain; sequence VPFRTVSEWL…AYSLLGLKDQ (65 aa). Residue tyrosine 921 is modified to Phosphotyrosine; by autocatalysis. Phosphotyrosine is present on tyrosine 930. Positions 974-976 match the PDZ-binding motif; the sequence is IPI.

This sequence belongs to the protein kinase superfamily. Tyr protein kinase family. Ephrin receptor subfamily. In terms of assembly, homodimer. Interacts with SLA. Interacts (phosphorylated form) with VAV2, VAV3 and PI3-kinase p85 subunit (PIK3R1, PIK3R2 or PIK3R3); critical for the EFNA1-induced activation of RAC1 which stimulates cell migration. Interacts with INPPL1; regulates activated EPHA2 endocytosis and degradation. Interacts (inactivated form) with PTK2/FAK1 and interacts (EFNA1 ligand-activated form) with PTPN11; regulates integrin-mediated adhesion. Interacts with ARHGEF16, DOCK4 and ELMO2; mediates ligand-independent activation of RAC1 which stimulates cell migration. Interacts with CLDN4; phosphorylates CLDN4 and may regulate tight junctions. Interacts with ACP1. Interacts with ANKS1A. Interacts with CEMIP. Interacts with NCK1; may regulate EPHA2 activity in cell migration and adhesion. Interacts with TIMD4. Post-translationally, autophosphorylates. Phosphorylated on tyrosine upon binding and activation by EFNA1. Phosphorylated residues Tyr-588 and Tyr-594 are required for binding VAV2 and VAV3 while phosphorylated residues Tyr-735 and Tyr-930 are required for binding PI3-kinase p85 subunit (PIK3R1, PIK3R2 or PIK3R3). These phosphorylated residues are critical for recruitment of VAV2 and VAV3 and PI3-kinase p85 subunit which transduce downstream signaling to activate RAC1 GTPase and cell migration. Dephosphorylation of Tyr-930 by PTPRF prevents the interaction of EPHA2 with NCK1. Phosphorylated at Ser-897 by PKB; serum-induced phosphorylation which targets EPHA2 to the cell leading edge and stimulates cell migration. Phosphorylation by PKB is inhibited by EFNA1-activated EPHA2 which regulates PKB activity via a reciprocal regulatory loop. Phosphorylated at Ser-897 in response to TNF by RPS6KA1 and RPS6KA3; RPS6KA-EPHA2 signaling pathway controls cell migration. Phosphorylated at Ser-897 by PKA; blocks cell retraction induced by EPHA2 kinase activity. Dephosphorylated by ACP1. Ubiquitinated by CHIP/STUB1. Ubiquitination is regulated by the HSP90 chaperone and regulates the receptor stability and activity through proteasomal degradation. ANKS1A prevents ubiquitination and degradation.

Its subcellular location is the cell membrane. It is found in the cell projection. It localises to the ruffle membrane. The protein localises to the lamellipodium membrane. The protein resides in the cell junction. Its subcellular location is the focal adhesion. The catalysed reaction is L-tyrosyl-[protein] + ATP = O-phospho-L-tyrosyl-[protein] + ADP + H(+). Functionally, receptor tyrosine kinase which binds promiscuously membrane-bound ephrin-A family ligands residing on adjacent cells, leading to contact-dependent bidirectional signaling into neighboring cells. The signaling pathway downstream of the receptor is referred to as forward signaling while the signaling pathway downstream of the ephrin ligand is referred to as reverse signaling. Activated by the ligand ephrin-A1/EFNA1 regulates migration, integrin-mediated adhesion, proliferation and differentiation of cells. Regulates cell adhesion and differentiation through DSG1/desmoglein-1 and inhibition of the ERK1/ERK2 signaling pathway. May also participate in UV radiation-induced apoptosis and have a ligand-independent stimulatory effect on chemotactic cell migration. During development, may function in distinctive aspects of pattern formation and subsequently in development of several fetal tissues. Involved for instance in angiogenesis, in early hindbrain development and epithelial proliferation and branching morphogenesis during mammary gland development. Engaged by the ligand ephrin-A5/EFNA5 may regulate lens fiber cells shape and interactions and be important for lens transparency development and maintenance. With ephrin-A2/EFNA2 may play a role in bone remodeling through regulation of osteoclastogenesis and osteoblastogenesis. The sequence is that of Ephrin type-A receptor 2 (EPHA2) from Macaca fascicularis (Crab-eating macaque).